Consider the following 344-residue polypeptide: N-acetyl-gamma-glutamyl-phosphate reductase (344 aa).

Residue Cys150 is part of the active site.

This sequence belongs to the NAGSA dehydrogenase family. Type 1 subfamily.

Its subcellular location is the cytoplasm. The enzyme catalyses N-acetyl-L-glutamate 5-semialdehyde + phosphate + NADP(+) = N-acetyl-L-glutamyl 5-phosphate + NADPH + H(+). The protein operates within amino-acid biosynthesis; L-arginine biosynthesis; N(2)-acetyl-L-ornithine from L-glutamate: step 3/4. Functionally, catalyzes the NADPH-dependent reduction of N-acetyl-5-glutamyl phosphate to yield N-acetyl-L-glutamate 5-semialdehyde. In Pseudomonas fluorescens (strain Pf0-1), this protein is N-acetyl-gamma-glutamyl-phosphate reductase.